A 713-amino-acid polypeptide reads, in one-letter code: Oligopeptidase PhomG (713 aa).

H461 provides a ligand contact to Zn(2+). Residue E462 is part of the active site. The Zn(2+) site is built by H465 and H468.

Belongs to the peptidase M3 family. In terms of assembly, monomer. Zn(2+) serves as cofactor.

The protein operates within mycotoxin biosynthesis. In terms of biological role, oligopeptidase; part of the gene cluster that mediates the biosynthesis of the phomopsins, a group of hexapeptide mycotoxins which infects lupins and causes lupinosis disease in livestock. Within the pathway, phomG and phomG' are probably involved in the processing of the phomA and phomA' precursors. The pathway starts with the processing of the precursor phomA by several endopeptidases including kexin proteases as well as the cluster-specific S41 family peptidase phomP1 and the oligopeptidase phomG to produce 10 identical copies of the hexapeptide Tyr-Val-Ile-Pro-Ile-Asp. After being excised from the precursor peptide, the core peptides are cyclized and modified post-translationally by enzymes encoded within the gene cluster. The timing and order of proteolysis of the phomA precursor and PTMs are still unknown. Two tyrosinase-like enzymes, phomQ1 and phomQ2, catalyze the chlorination and hydroxylation of Tyr, respectively. PhomYb, is proposed to be involved in the construction of the macrocyclic structure. The other 4 ustYa family proteins may be involved in PTMs that generate the unique structure of phomopsin A. PhomYa is required for the hydroxylation of C-beta of Tyr. PhomYc, phomYd, and phomYe are responsible for the biosynthesis of 2,3-dehydroisoleucine (dIle), 2,3-dehydroaspartic acid (dAsp), and 3,4-dehydroproline (dPro), respectively. While dIle formation by phomYc is indispensable for the installation of dAsp by phomYd, the order of the other PTMs have not been elucidated yet. Most of the biosynthetic enzymes likely have broad substrate specificity, and thus, there might be a metabolic grid from a precursor to phomopsin A. The enzyme(s) responsible for the biosynthesis of 3,4-dehydrovaline (dVal) have also not been identified yet. Finally, phomM acts as an S-adenosylmethionine-dependent alpha-N-methyltransferase that catalyzes two successive N-methylation reactions, converting N-desmethyl-phomopsin A to phomopsin A and phomopsin A further to an N,N-dimethylated congener called phomopsin E. The sequence is that of Oligopeptidase PhomG from Diaporthe leptostromiformis (Lupinosis disease fungus).